The sequence spans 458 residues: Exodeoxyribonuclease 7 large subunit (458 aa).

This sequence belongs to the XseA family. As to quaternary structure, heterooligomer composed of large and small subunits.

The protein localises to the cytoplasm. The catalysed reaction is Exonucleolytic cleavage in either 5'- to 3'- or 3'- to 5'-direction to yield nucleoside 5'-phosphates.. In terms of biological role, bidirectionally degrades single-stranded DNA into large acid-insoluble oligonucleotides, which are then degraded further into small acid-soluble oligonucleotides. The sequence is that of Exodeoxyribonuclease 7 large subunit from Escherichia coli O6:H1 (strain CFT073 / ATCC 700928 / UPEC).